Reading from the N-terminus, the 241-residue chain is B-cell receptor-associated protein 29 (241 aa).

Over methionine 1–alanine 6 the chain is Lumenal. A helical transmembrane segment spans residues alanine 7–isoleucine 27. Topologically, residues proline 28–lysine 43 are cytoplasmic. Residues isoleucine 44 to leucine 64 traverse the membrane as a helical segment. At aspartate 65–asparagine 103 the chain is on the lumenal side. A helical membrane pass occupies residues leucine 104 to isoleucine 124. Residues threonine 125 to leucine 241 lie on the Cytoplasmic side of the membrane. A coiled-coil region spans residues glycine 166–leucine 233. Positions lysine 193–leucine 223 are disordered. Residues methionine 206–leucine 223 show a composition bias toward basic and acidic residues. A Di-lysine motif motif is present at residues lysine 238–leucine 241.

This sequence belongs to the BCAP29/BCAP31 family. As to quaternary structure, homodimer and heterodimer with BCAP31. Binds CASP8 as a complex containing BCAP31, BCAP29, BCL2 and/or BCL2L1. Interacts with VAMP3, VAMP1 and membrane IgD immunoglobulins. May interact with ACTG1 and non-muscle myosin II.

It is found in the endoplasmic reticulum membrane. May play a role in anterograde transport of membrane proteins from the endoplasmic reticulum to the Golgi. May be involved in CASP8-mediated apoptosis. The chain is B-cell receptor-associated protein 29 (BCAP29) from Pongo abelii (Sumatran orangutan).